The following is a 187-amino-acid chain: Elongation factor P (187 aa).

Lys34 carries the N6-(3,6-diaminohexanoyl)-5-hydroxylysine modification.

The protein belongs to the elongation factor P family. In terms of processing, may be beta-lysylated on the epsilon-amino group of Lys-34 by the combined action of EpmA and EpmB, and then hydroxylated on the C5 position of the same residue by EpmC (if this protein is present). Lysylation is critical for the stimulatory effect of EF-P on peptide-bond formation. The lysylation moiety may extend toward the peptidyltransferase center and stabilize the terminal 3-CCA end of the tRNA. Hydroxylation of the C5 position on Lys-34 may allow additional potential stabilizing hydrogen-bond interactions with the P-tRNA.

It localises to the cytoplasm. The protein operates within protein biosynthesis; polypeptide chain elongation. Involved in peptide bond synthesis. Alleviates ribosome stalling that occurs when 3 or more consecutive Pro residues or the sequence PPG is present in a protein, possibly by augmenting the peptidyl transferase activity of the ribosome. Modification of Lys-34 is required for alleviation. The protein is Elongation factor P of Thioalkalivibrio sulfidiphilus (strain HL-EbGR7).